The following is a 383-amino-acid chain: Cobalt-precorrin-5B C(1)-methyltransferase (383 aa).

The interval 1-24 (MQPSARRPFDLATPAPNGLRRGRT) is disordered.

The protein belongs to the CbiD family.

The enzyme catalyses Co-precorrin-5B + S-adenosyl-L-methionine = Co-precorrin-6A + S-adenosyl-L-homocysteine. Its pathway is cofactor biosynthesis; adenosylcobalamin biosynthesis; cob(II)yrinate a,c-diamide from sirohydrochlorin (anaerobic route): step 6/10. Its function is as follows. Catalyzes the methylation of C-1 in cobalt-precorrin-5B to form cobalt-precorrin-6A. This is Cobalt-precorrin-5B C(1)-methyltransferase from Ralstonia nicotianae (strain ATCC BAA-1114 / GMI1000) (Ralstonia solanacearum).